The primary structure comprises 579 residues: Zinc finger-containing ubiquitin peptidase 1 (579 aa).

The C2H2-type 1 zinc finger occupies 2 to 25 (LSCDICGETVSSEPDMKAHLLIVH). The C2H2-type 2; atypical zinc-finger motif lies at 30 to 53 (VICPFCKLSGVNYDEMCFHIETAH). 2 consecutive C2H2-type zinc fingers follow at residues 155-178 (PECPFCGKIEDNSQDMETHVKTKH) and 194-216 (YDCPMCGLVCTNYHILQEHVDLH). Residues 227-249 (NRVQCSRDLELAQQLQQEEDRKR) form an MIU region. The interval 250 to 275 (RSEESRQEMEEFQKLQRQYGLDNSGG) is zUBD/ZHA. K263 carries the post-translational modification N6-acetyllysine. Residue C361 is the Nucleophile of the active site. H492 (proton acceptor) is an active-site residue. The active site involves D513.

The protein belongs to the peptidase C78 family. ZUFSP subfamily. In terms of assembly, interacts with RPA1 and RPA2.

It localises to the cytoplasm. Its subcellular location is the nucleus. The catalysed reaction is Thiol-dependent hydrolysis of ester, thioester, amide, peptide and isopeptide bonds formed by the C-terminal Gly of ubiquitin (a 76-residue protein attached to proteins as an intracellular targeting signal).. In terms of biological role, deubiquitinase with endodeubiquitinase activity that specifically interacts with and cleaves 'Lys-63'-linked long polyubiquitin chains. Shows only weak activity against 'Lys-11' and 'Lys-48'-linked chains. Plays an important role in genome stability pathways, functioning to prevent spontaneous DNA damage and also promote cellular survival in response to exogenous DNA damage. Modulates the ubiquitination status of replication protein A (RPA) complex proteins in response to replication stress. The chain is Zinc finger-containing ubiquitin peptidase 1 from Bos taurus (Bovine).